Reading from the N-terminus, the 85-residue chain is RNA-binding protein Hfq (85 aa).

The Sm domain maps to 9-68; sequence DPFLNALRRERIPVSIYLVNGIKLQGQVESFDQFVILLKNTVSQMVYKHAISTVVPARPV.

The protein belongs to the Hfq family. In terms of assembly, homohexamer.

In terms of biological role, RNA chaperone that binds small regulatory RNA (sRNAs) and mRNAs to facilitate mRNA translational regulation in response to envelope stress, environmental stress and changes in metabolite concentrations. Also binds with high specificity to tRNAs. This Tolumonas auensis (strain DSM 9187 / NBRC 110442 / TA 4) protein is RNA-binding protein Hfq.